A 237-amino-acid chain; its full sequence is Large ribosomal subunit protein uL3 (237 aa).

2 disordered regions span residues 133-155 (ASHGNSITHRSHGSTGQRQDPGK) and 213-237 (PENAPKPAGLRAGAKAEAAATEGAE). A compositionally biased stretch (polar residues) spans 135-150 (HGNSITHRSHGSTGQR). Gln151 carries the post-translational modification N5-methylglutamine. Positions 220 to 237 (AGLRAGAKAEAAATEGAE) are enriched in low complexity.

It belongs to the universal ribosomal protein uL3 family. In terms of assembly, part of the 50S ribosomal subunit. Forms a cluster with proteins L14 and L19. Post-translationally, methylated by PrmB.

Its function is as follows. One of the primary rRNA binding proteins, it binds directly near the 3'-end of the 23S rRNA, where it nucleates assembly of the 50S subunit. In Brucella canis (strain ATCC 23365 / NCTC 10854 / RM-666), this protein is Large ribosomal subunit protein uL3.